The sequence spans 198 residues: HTH-type transcriptional regulator BetI (198 aa).

Positions 8-68 (PLRRRELIDA…ATMRHLLREL (61 aa)) constitute an HTH tetR-type domain. The segment at residues 31–50 (TVAQIAHEAGVSPALAHHYF) is a DNA-binding region (H-T-H motif).

It participates in amine and polyamine biosynthesis; betaine biosynthesis via choline pathway [regulation]. Its function is as follows. Repressor involved in the biosynthesis of the osmoprotectant glycine betaine. It represses transcription of the choline transporter BetT and the genes of BetAB involved in the synthesis of glycine betaine. The sequence is that of HTH-type transcriptional regulator BetI from Brucella abortus (strain 2308).